The chain runs to 582 residues: Proline--tRNA ligase (582 aa).

This sequence belongs to the class-II aminoacyl-tRNA synthetase family. ProS type 1 subfamily. In terms of assembly, homodimer.

The protein resides in the cytoplasm. The catalysed reaction is tRNA(Pro) + L-proline + ATP = L-prolyl-tRNA(Pro) + AMP + diphosphate. Catalyzes the attachment of proline to tRNA(Pro) in a two-step reaction: proline is first activated by ATP to form Pro-AMP and then transferred to the acceptor end of tRNA(Pro). As ProRS can inadvertently accommodate and process non-cognate amino acids such as alanine and cysteine, to avoid such errors it has two additional distinct editing activities against alanine. One activity is designated as 'pretransfer' editing and involves the tRNA(Pro)-independent hydrolysis of activated Ala-AMP. The other activity is designated 'posttransfer' editing and involves deacylation of mischarged Ala-tRNA(Pro). The misacylated Cys-tRNA(Pro) is not edited by ProRS. The polypeptide is Proline--tRNA ligase (Mycobacterium ulcerans (strain Agy99)).